The chain runs to 636 residues: Translation factor GUF1 homolog, chloroplastic (636 aa).

The tr-type G domain occupies 31–212 (NLARNFSIIA…AIVTKIPPPQ (182 aa)). GTP-binding positions include 40-47 (AHIDHGKS), 105-109 (DTPGH), and 159-162 (NKID).

It belongs to the TRAFAC class translation factor GTPase superfamily. Classic translation factor GTPase family. LepA subfamily.

It is found in the plastid. It localises to the chloroplast. It catalyses the reaction GTP + H2O = GDP + phosphate + H(+). In terms of biological role, promotes chloroplast protein synthesis. May act as a fidelity factor of the translation reaction, by catalyzing a one-codon backward translocation of tRNAs on improperly translocated ribosomes. The polypeptide is Translation factor GUF1 homolog, chloroplastic (Oryza sativa subsp. indica (Rice)).